Here is a 396-residue protein sequence, read N- to C-terminus: Period circadian protein (396 aa).

Disordered stretches follow at residues 27 to 120 (VTAP…APPV), 164 to 188 (LEYS…WEGE), 253 to 273 (GGNG…TNQY), and 333 to 362 (SPSS…TSQA). The segment covering 93 to 114 (GTSGTGNSGDGGGGGGANGTGS) has biased composition (gly residues). A compositionally biased stretch (gly residues) spans 253 to 262 (GGNGNVGSGN). Residues 333-342 (SPSSTNTNPN) show a composition bias toward low complexity.

In terms of assembly, forms a heterodimer with timeless (TIM); the complex then translocates into the nucleus. Phosphorylated with a circadian rhythmicity, probably by the double-time protein (dbt). Phosphorylation could be implicated in the stability of per monomer and in the formation of heterodimer per-tim.

It is found in the nucleus. The protein resides in the cytoplasm. The protein localises to the perinuclear region. Functionally, essential for biological clock functions. Determines the period length of circadian and ultradian rhythms; an increase in PER dosage leads to shortened circadian rhythms and a decrease leads to lengthened circadian rhythms. Essential for the circadian rhythmicity of locomotor activity, eclosion behavior, and for the rhythmic component of the male courtship song that originates in the thoracic nervous system. The biological cycle depends on the rhythmic formation and nuclear localization of the TIM-PER complex. Light induces the degradation of TIM, which promotes elimination of PER. Nuclear activity of the heterodimer coordinatively regulates PER and TIM transcription through a negative feedback loop. Behaves as a negative element in circadian transcriptional loop. Does not appear to bind DNA, suggesting indirect transcriptional inhibition. In Drosophila pavlovskiana (Fruit fly), this protein is Period circadian protein (per).